A 349-amino-acid chain; its full sequence is MDDNKAKALKAALGQIEKQFGKNTIMHLGDNSATLDVDVVSTGSLGLDIALGIGGLPKGRIIEIYGPESSGKTTLTLQAIAECQKQGGTCAFIDAEHALDPIYARKLGVNTDDLLVSQPDNGEQALEITDMLVRSGALDMIVIDSVAALTPRAEIEGEMGDSHMGLQARLMSQALRKITGNAKRSNCMVIFINQIRMKIGVMFGSPETTTGGNALKFYASVRLDIRRIGAVKSGDEIIGNQTRVKVIKNKMAPPFRQAEFEITYGEGTNHLAEVIDLGVEIGVVGKAGAWYSYGDEKIGQGKANSVLFLKDNPAIAEEIEAKIRAEKLAVEPEKGAEAVDEVEPESEVE.

Position 66-73 (66-73 (GPESSGKT)) interacts with ATP.

This sequence belongs to the RecA family.

The protein localises to the cytoplasm. Can catalyze the hydrolysis of ATP in the presence of single-stranded DNA, the ATP-dependent uptake of single-stranded DNA by duplex DNA, and the ATP-dependent hybridization of homologous single-stranded DNAs. It interacts with LexA causing its activation and leading to its autocatalytic cleavage. The polypeptide is Protein RecA (Psychrobacter sp. (strain PRwf-1)).